A 905-amino-acid polypeptide reads, in one-letter code: Translation initiation factor IF-2 (905 aa).

Over residues 50–62 (HYEAKGGEDKAAE) the composition is skewed to basic and acidic residues. The interval 50–306 (HYEAKGGEDK…QKHEVGGVRL (257 aa)) is disordered. Residues 63 to 75 (KNAPAATPASASK) are compositionally biased toward low complexity. Residues 89–125 (GPKPSAAPKPGAAPKPGGAPKPGGAPKPGATPKPGGA) are compositionally biased toward pro residues. Residues 161–171 (PFSTGSSSDRP) show a composition bias toward low complexity. Residues 233-276 (GSGGGGRGRGGRGGGPGHGGPGHGGFRGRGGRRGGTAGAFGRPG) are compositionally biased toward gly residues. A compositionally biased stretch (basic residues) spans 280-290 (RRGKKSKRQKR). Basic and acidic residues predominate over residues 291–302 (HEFEEQQKHEVG). Residues 401 to 575 (KRPPVVTVMG…LTADAALELT (175 aa)) enclose the tr-type G domain. The interval 410–417 (GHVDHGKT) is G1. 410–417 (GHVDHGKT) serves as a coordination point for GTP. A G2 region spans residues 435–439 (GITQG). The segment at 460–463 (DTPG) is G3. Residues 460–464 (DTPGH) and 514–517 (NKID) contribute to the GTP site. Positions 514–517 (NKID) are G4. The tract at residues 550-552 (SAK) is G5.

The protein belongs to the TRAFAC class translation factor GTPase superfamily. Classic translation factor GTPase family. IF-2 subfamily.

Its subcellular location is the cytoplasm. One of the essential components for the initiation of protein synthesis. Protects formylmethionyl-tRNA from spontaneous hydrolysis and promotes its binding to the 30S ribosomal subunits. Also involved in the hydrolysis of GTP during the formation of the 70S ribosomal complex. This Corynebacterium aurimucosum (strain ATCC 700975 / DSM 44827 / CIP 107346 / CN-1) (Corynebacterium nigricans) protein is Translation initiation factor IF-2.